The chain runs to 262 residues: tRNA U34 carboxymethyltransferase (262 aa).

Carboxy-S-adenosyl-L-methionine contacts are provided by residues Lys25, Trp39, Lys44, Gly63, 114 to 115 (VE), Tyr135, and Arg250.

It belongs to the class I-like SAM-binding methyltransferase superfamily. CmoB family. As to quaternary structure, homotetramer.

The enzyme catalyses carboxy-S-adenosyl-L-methionine + 5-hydroxyuridine(34) in tRNA = 5-carboxymethoxyuridine(34) in tRNA + S-adenosyl-L-homocysteine + H(+). Its function is as follows. Catalyzes carboxymethyl transfer from carboxy-S-adenosyl-L-methionine (Cx-SAM) to 5-hydroxyuridine (ho5U) to form 5-carboxymethoxyuridine (cmo5U) at position 34 in tRNAs. The protein is tRNA U34 carboxymethyltransferase of Helicobacter acinonychis (strain Sheeba).